A 351-amino-acid chain; its full sequence is Ferredoxin--NADP reductase (351 aa).

7 residues coordinate FAD: Asp-44, Gln-52, Tyr-57, Ile-97, Phe-132, Asp-296, and Ser-337.

It belongs to the ferredoxin--NADP reductase type 2 family. Homodimer. FAD is required as a cofactor.

The enzyme catalyses 2 reduced [2Fe-2S]-[ferredoxin] + NADP(+) + H(+) = 2 oxidized [2Fe-2S]-[ferredoxin] + NADPH. The protein is Ferredoxin--NADP reductase of Burkholderia vietnamiensis (strain G4 / LMG 22486) (Burkholderia cepacia (strain R1808)).